A 246-amino-acid chain; its full sequence is uncharacterized protein (246 aa).

The chain crosses the membrane as a helical span at residues 7–29 (GRGALASTGGCVVLAVAALMFVF).

Its subcellular location is the membrane. This is an uncharacterized protein from Treponema pallidum (strain Nichols).